We begin with the raw amino-acid sequence, 126 residues long: Fatty acid-binding protein, liver (126 aa).

Position 2 is an N-acetylalanine (Ala2). Cholate is bound by residues Lys77, His99, and Gln101.

The protein belongs to the calycin superfamily. Fatty-acid binding protein (FABP) family.

The protein resides in the cytoplasm. Functionally, binds free fatty acids and their coenzyme A derivatives, bilirubin, and some other small molecules in the cytoplasm. May be involved in intracellular lipid transport. The polypeptide is Fatty acid-binding protein, liver (fabp1) (Aquarana catesbeiana (American bullfrog)).